The chain runs to 448 residues: Exodeoxyribonuclease 7 large subunit (448 aa).

Belongs to the XseA family. As to quaternary structure, heterooligomer composed of large and small subunits.

The protein resides in the cytoplasm. It carries out the reaction Exonucleolytic cleavage in either 5'- to 3'- or 3'- to 5'-direction to yield nucleoside 5'-phosphates.. Bidirectionally degrades single-stranded DNA into large acid-insoluble oligonucleotides, which are then degraded further into small acid-soluble oligonucleotides. This Bacillus pumilus (strain SAFR-032) protein is Exodeoxyribonuclease 7 large subunit.